A 1791-amino-acid polypeptide reads, in one-letter code: 1-phosphatidylinositol-3-phosphate 5-kinase FAB1B (1791 aa).

The FYVE-type zinc-finger motif lies at 39 to 105 (DQSCRVCYEC…VCNYCFRQWE (67 aa)). Zn(2+) contacts are provided by Cys-45, Cys-48, Cys-61, Cys-64, Cys-69, Cys-72, Cys-97, and Cys-100. 4 disordered regions span residues 166–186 (HGVS…SRRS), 279–370 (EQFQ…DRTT), 770–790 (SDLS…NPIV), and 834–859 (QQNN…DHQS). Basic and acidic residues predominate over residues 279–293 (EQFQKKSEHDGRDEC). A compositionally biased stretch (acidic residues) spans 324-345 (PENEEDERESALFDEEDNEGDA). Residues 838–850 (EKPKETQSQKEEF) are compositionally biased toward basic and acidic residues. Residues 1077–1111 (EKGFRRRIGELEEVLQKEKAEFEENMQKILHREVN) adopt a coiled-coil conformation. Basic and acidic residues predominate over residues 1151 to 1164 (NSDDTKREENEKPP). The interval 1151–1242 (NSDDTKREEN…DTSYPLENKV (92 aa)) is disordered. 2 stretches are compositionally biased toward polar residues: residues 1167-1188 (KSQT…SEVN) and 1196-1206 (TGDTGSLNNVQ). Residues 1433-1758 (SELNIPRPVD…RFRKAMTTYF (326 aa)) form the PIPK domain. The disordered stretch occupies residues 1769 to 1791 (NVVANNSKSDQPEETSQAGTQAE). Polar residues predominate over residues 1771-1791 (VANNSKSDQPEETSQAGTQAE).

Component of the PI(3,5)P2 regulatory complex at least composed of ATG18, SAC/FIG4, FAB1 and VAC14. Mg(2+) serves as cofactor. Mn(2+) is required as a cofactor. In terms of tissue distribution, ubiquitous with highest expression levels in the root hair zone, pollen, and stamens.

It localises to the endosome membrane. It catalyses the reaction a 1,2-diacyl-sn-glycero-3-phospho-(1D-myo-inositol-3-phosphate) + ATP = a 1,2-diacyl-sn-glycero-3-phospho-(1D-myo-inositol-3,5-bisphosphate) + ADP + H(+). The PI(3,5)P2 regulatory complex regulates both the synthesis and turnover of phosphatidylinositol 3,5-bisphosphate (PtdIns(3,5)P2). Catalyzes the phosphorylation of phosphatidylinositol 3-phosphate on the fifth hydroxyl of the myo-inositol ring, to form phosphatidylinositol 3,5-bisphosphate. Plays an important role in maintenance of endomembrane homeostasis including endocytosis, vacuole formation, and vacuolar acidification processes. Required for development of viable pollen. Might mediate recycling of auxin transporters. In Arabidopsis thaliana (Mouse-ear cress), this protein is 1-phosphatidylinositol-3-phosphate 5-kinase FAB1B (FAB1B).